The sequence spans 111 residues: Nucleoid-associated protein PputW619_3586 (111 aa).

The segment at 87-111 (EQSSQEKMGGMTAGMQLPPGFKMPF) is disordered.

It belongs to the YbaB/EbfC family. As to quaternary structure, homodimer.

It is found in the cytoplasm. The protein resides in the nucleoid. In terms of biological role, binds to DNA and alters its conformation. May be involved in regulation of gene expression, nucleoid organization and DNA protection. The polypeptide is Nucleoid-associated protein PputW619_3586 (Pseudomonas putida (strain W619)).